The following is an 82-amino-acid chain: uncharacterized protein (82 aa).

A run of 2 helical transmembrane segments spans residues 29 to 49 (LMNAGSAVADIISPIAFGIII) and 55 to 75 (WSLPFYGSVALLVIGIFLTFF).

The protein resides in the cell membrane. This is an uncharacterized protein from Escherichia coli (strain K12).